We begin with the raw amino-acid sequence, 239 residues long: Sugar fermentation stimulation protein homolog (239 aa).

The protein belongs to the SfsA family.

This chain is Sugar fermentation stimulation protein homolog, found in Synechococcus sp. (strain JA-2-3B'a(2-13)) (Cyanobacteria bacterium Yellowstone B-Prime).